The sequence spans 508 residues: Light-independent protochlorophyllide reductase subunit B (508 aa).

Asp36 contributes to the [4Fe-4S] cluster binding site. Asp294 acts as the Proton donor in catalysis. 429–430 contributes to the substrate binding site; sequence GM.

This sequence belongs to the ChlB/BchB/BchZ family. In terms of assembly, protochlorophyllide reductase is composed of three subunits; ChlL, ChlN and ChlB. Forms a heterotetramer of two ChlB and two ChlN subunits. The cofactor is [4Fe-4S] cluster.

It carries out the reaction chlorophyllide a + oxidized 2[4Fe-4S]-[ferredoxin] + 2 ADP + 2 phosphate = protochlorophyllide a + reduced 2[4Fe-4S]-[ferredoxin] + 2 ATP + 2 H2O. The protein operates within porphyrin-containing compound metabolism; chlorophyll biosynthesis (light-independent). Functionally, component of the dark-operative protochlorophyllide reductase (DPOR) that uses Mg-ATP and reduced ferredoxin to reduce ring D of protochlorophyllide (Pchlide) to form chlorophyllide a (Chlide). This reaction is light-independent. The NB-protein (ChlN-ChlB) is the catalytic component of the complex. In Synechocystis sp. (strain ATCC 27184 / PCC 6803 / Kazusa), this protein is Light-independent protochlorophyllide reductase subunit B.